The following is a 521-amino-acid chain: Vang-like protein 2-A (521 aa).

The interval 1-81 is disordered; that stretch reads MDNDSQYSGY…TTVVTGTSEH (81 aa). Residues 1–108 lie on the Cytoplasmic side of the membrane; it reads MDNDSQYSGY…AKLDCSRHLG (108 aa). The span at 15–33 shows a compositional bias: basic residues; that stretch reads GHSRSSRKHRDRRERHRSK. A compositionally biased stretch (basic and acidic residues) spans 57–67; it reads ESTRGEDRDDN. Low complexity predominate over residues 69–81; the sequence is GETTTVVTGTSEH. Residues 109-129 form a helical membrane-spanning segment; it reads VVIGGALALLSFLTPIAFMLL. Topologically, residues 130–147 are extracellular; it reads PQILWREDLEQCGTACEG. The helical transmembrane segment at 148-168 threads the bilayer; it reads LFISVAFKLLILLLGSWALFF. Residues 169–178 lie on the Cytoplasmic side of the membrane; that stretch reads RRPKAFFPRV. A helical membrane pass occupies residues 179 to 199; the sequence is FVFRALLMVLVFLLVVSYWLF. Residues 200-218 are Extracellular-facing; the sequence is YGVRILESRDKNYQGIVQY. The helical transmembrane segment at 219-239 threads the bilayer; that stretch reads AVSLVDALLFVHYLAVVLLEL. Residues 240 to 521 are Cytoplasmic-facing; the sequence is RQLQPQFTIK…VMRLQSETSV (282 aa). The short motif at 518–521 is the PDZ-binding element; it reads ETSV.

Belongs to the Vang family. Interacts with dvl/dsh. Interacts with prickle3. In terms of tissue distribution, during gastrulation, broadly expressed throughout the marginal zone and animal cap region. From the neurula stages, expression becomes concentrated in neural tissues, in the neural plate and neural tube.

The protein localises to the cell membrane. Has a role in non-canonical Wnt/planar cell polarity (PCP) signaling; can recruit dvl/dsh and prickle from the cytoplasm to the plasma membrane. Acts in a PCP complex to regulate the polarized assembly of fibronectrin on the surface of the mesoderm during gastrulation. Regulates convergent extension cell movements in both dorsal mesoderm and neural tissue during gastrulation, without affecting cell fate. Regulates neural fold closure during neurulation. May be required for cell surface localization of fzd3 and fzd6 in the inner ear. The sequence is that of Vang-like protein 2-A (vangl2-a) from Xenopus laevis (African clawed frog).